The primary structure comprises 469 residues: Protein DETOXIFICATION 18 (469 aa).

12 helical membrane-spanning segments follow: residues 40–60 (LPMI…VMFA), 73–93 (LANS…SGAL), 121–141 (LVFT…FLLL), 152–172 (ALYM…QNIL), 183–203 (PLVL…YALV), 206–226 (AGLG…IAFV), 252–274 (HVVL…YWAF), 293–313 (LVAI…GLSA), 344–364 (VLAL…VGLF), 374–394 (FASL…QGVL), 406–426 (LATV…SVLC), and 438–458 (WIGL…MTIF).

It belongs to the multi antimicrobial extrusion (MATE) (TC 2.A.66.1) family.

The protein localises to the membrane. The chain is Protein DETOXIFICATION 18 from Arabidopsis thaliana (Mouse-ear cress).